A 110-amino-acid polypeptide reads, in one-letter code: Phosphoribosyl-ATP pyrophosphatase (110 aa).

This sequence belongs to the PRA-PH family.

The protein localises to the cytoplasm. The enzyme catalyses 1-(5-phospho-beta-D-ribosyl)-ATP + H2O = 1-(5-phospho-beta-D-ribosyl)-5'-AMP + diphosphate + H(+). The protein operates within amino-acid biosynthesis; L-histidine biosynthesis; L-histidine from 5-phospho-alpha-D-ribose 1-diphosphate: step 2/9. In Pseudomonas fluorescens (strain SBW25), this protein is Phosphoribosyl-ATP pyrophosphatase.